Here is a 152-residue protein sequence, read N- to C-terminus: Xanthine-guanine phosphoribosyltransferase (152 aa).

5-phospho-alpha-D-ribose 1-diphosphate is bound by residues 37–38 (RG), Arg-69, and 88–96 (DDLVDTGGT). Arg-69 provides a ligand contact to GMP. Position 89 (Asp-89) interacts with Mg(2+). 2 residues coordinate guanine: Asp-92 and Ile-135. Asp-92 and Ile-135 together coordinate xanthine. GMP contacts are provided by residues 92-96 (DTGGT) and 134-135 (WI).

The protein belongs to the purine/pyrimidine phosphoribosyltransferase family. XGPT subfamily. In terms of assembly, homotetramer. Requires Mg(2+) as cofactor.

It is found in the cell inner membrane. It catalyses the reaction GMP + diphosphate = guanine + 5-phospho-alpha-D-ribose 1-diphosphate. The enzyme catalyses XMP + diphosphate = xanthine + 5-phospho-alpha-D-ribose 1-diphosphate. The catalysed reaction is IMP + diphosphate = hypoxanthine + 5-phospho-alpha-D-ribose 1-diphosphate. Its pathway is purine metabolism; GMP biosynthesis via salvage pathway; GMP from guanine: step 1/1. It functions in the pathway purine metabolism; XMP biosynthesis via salvage pathway; XMP from xanthine: step 1/1. Functionally, purine salvage pathway enzyme that catalyzes the transfer of the ribosyl-5-phosphate group from 5-phospho-alpha-D-ribose 1-diphosphate (PRPP) to the N9 position of the 6-oxopurines guanine and xanthine to form the corresponding ribonucleotides GMP (guanosine 5'-monophosphate) and XMP (xanthosine 5'-monophosphate), with the release of PPi. To a lesser extent, also acts on hypoxanthine. The polypeptide is Xanthine-guanine phosphoribosyltransferase (Shigella boydii serotype 18 (strain CDC 3083-94 / BS512)).